Consider the following 209-residue polypeptide: Imidazoleglycerol-phosphate dehydratase (209 aa).

The protein belongs to the imidazoleglycerol-phosphate dehydratase family.

The protein resides in the cytoplasm. The catalysed reaction is D-erythro-1-(imidazol-4-yl)glycerol 3-phosphate = 3-(imidazol-4-yl)-2-oxopropyl phosphate + H2O. The protein operates within amino-acid biosynthesis; L-histidine biosynthesis; L-histidine from 5-phospho-alpha-D-ribose 1-diphosphate: step 6/9. In Prochlorococcus marinus (strain MIT 9313), this protein is Imidazoleglycerol-phosphate dehydratase.